A 204-amino-acid polypeptide reads, in one-letter code: Probable proteasome subunit beta type-3 (204 aa).

It belongs to the peptidase T1B family. The 26S proteasome consists of a 20S proteasome core and two 19S regulatory subunits. The 20S proteasome core is composed of 28 subunits that are arranged in four stacked rings, resulting in a barrel-shaped structure. The two end rings are each formed by seven alpha subunits, and the two central rings are each formed by seven beta subunits. The catalytic chamber with the active sites is on the inside of the barrel.

It localises to the cytoplasm. The protein resides in the nucleus. Non-catalytic component of the proteasome, a multicatalytic proteinase complex which is characterized by its ability to cleave peptides with Arg, Phe, Tyr, Leu, and Glu adjacent to the leaving group at neutral or slightly basic pH. The proteasome has an ATP-dependent proteolytic activity. The polypeptide is Probable proteasome subunit beta type-3 (pup3) (Schizosaccharomyces pombe (strain 972 / ATCC 24843) (Fission yeast)).